Reading from the N-terminus, the 455-residue chain is Argininosuccinate lyase (455 aa).

It belongs to the lyase 1 family. Argininosuccinate lyase subfamily.

It localises to the cytoplasm. It carries out the reaction 2-(N(omega)-L-arginino)succinate = fumarate + L-arginine. Its pathway is amino-acid biosynthesis; L-arginine biosynthesis; L-arginine from L-ornithine and carbamoyl phosphate: step 3/3. The protein is Argininosuccinate lyase of Roseiflexus sp. (strain RS-1).